A 944-amino-acid polypeptide reads, in one-letter code: LPS-assembly protein LptD (944 aa).

An N-terminal signal peptide occupies residues 1-33; it reads MALKSPAFRRKFPLLVTGGLLALQPLATSFVVA. The disordered stretch occupies residues 52–102; the sequence is KATGNLPPRPVHPGAAAASSGAEAPGEVGEAQAEKPMLVTESKGRGLKSRS. Low complexity predominate over residues 64–82; the sequence is PGAAAASSGAEAPGEVGEA.

Belongs to the LptD family. Component of the lipopolysaccharide transport and assembly complex. Interacts with LptE and LptA.

It localises to the cell outer membrane. Together with LptE, is involved in the assembly of lipopolysaccharide (LPS) at the surface of the outer membrane. This Pseudomonas entomophila (strain L48) protein is LPS-assembly protein LptD.